The sequence spans 327 residues: ATPase GET3 (327 aa).

ATP is bound at residue 27 to 34 (KGGVGKTT). Asp56 is a catalytic residue. Glu231 and Asn258 together coordinate ATP. Zn(2+) contacts are provided by Cys269 and Cys272.

It belongs to the arsA ATPase family. In terms of assembly, homodimer. Component of the Golgi to ER traffic (GET) complex, which is composed of GET1, GET2 and GET3. Within the complex, GET1 and GET2 form a heterotetramer which is stabilized by phosphatidylinositol binding and which binds to the GET3 homodimer. Interacts with the chloride channel protein GEF1.

It is found in the cytoplasm. The protein localises to the endoplasmic reticulum. The protein resides in the golgi apparatus. ATPase required for the post-translational delivery of tail-anchored (TA) proteins to the endoplasmic reticulum. Recognizes and selectively binds the transmembrane domain of TA proteins in the cytosol. This complex then targets to the endoplasmic reticulum by membrane-bound receptors GET1 and GET2, where the tail-anchored protein is released for insertion. This process is regulated by ATP binding and hydrolysis. ATP binding drives the homodimer towards the closed dimer state, facilitating recognition of newly synthesized TA membrane proteins. ATP hydrolysis is required for insertion. Subsequently, the homodimer reverts towards the open dimer state, lowering its affinity for the GET1-GET2 receptor, and returning it to the cytosol to initiate a new round of targeting. Cooperates with the HDEL receptor ERD2 to mediate the ATP-dependent retrieval of resident ER proteins that contain a C-terminal H-D-E-L retention signal from the Golgi to the ER. Involved in low-level resistance to the oxyanions arsenite and arsenate, and in heat tolerance. This chain is ATPase GET3, found in Yarrowia lipolytica (strain CLIB 122 / E 150) (Yeast).